The primary structure comprises 96 residues: Large ribosomal subunit protein uL23 (96 aa).

Belongs to the universal ribosomal protein uL23 family. Part of the 50S ribosomal subunit. Contacts protein L29, and trigger factor when it is bound to the ribosome.

One of the early assembly proteins it binds 23S rRNA. One of the proteins that surrounds the polypeptide exit tunnel on the outside of the ribosome. Forms the main docking site for trigger factor binding to the ribosome. The chain is Large ribosomal subunit protein uL23 from Caldicellulosiruptor bescii (strain ATCC BAA-1888 / DSM 6725 / KCTC 15123 / Z-1320) (Anaerocellum thermophilum).